The sequence spans 241 residues: MTTVKRTVRLITDQNVLPGGEAAVLNDQSFPVREWSIKLVCLNPQGEETDASFVDRVTYKLHPTFQNPTRTIRKPPFQIKEQGWGEFEMEIIIYYADKGGEHRFLHYLHFQQEHYHEDIELNINATRPGLLKALTATGEVPGYSDEGEEARKDKRKNESEVGAGKKKAKAKPVDMDKLAEGLQKLQEDDLLQVVQMVNENKTPDMYVRNDIEGGEFHIDLYTLPDNLLLLLYSFCAKRVTM.

The YEATS domain occupies 1–137 (MTTVKRTVRL…PGLLKALTAT (137 aa)). The tract at residues 141–169 (PGYSDEGEEARKDKRKNESEVGAGKKKAK) is disordered. The span at 149–159 (EARKDKRKNES) shows a compositional bias: basic and acidic residues.

It belongs to the TAF14 family. Component of the fcp1/TFIIF/polII complex via interaction of tfg3 with both tfg1/TFIIF-alpha and tfg2/TFIIF-beta subunits. Component of the SWI/SNF global transcription activator complex composed of at least arp9, arp42, snf5, snf22, snf30, sbf59, sol1, ssr1, ssr2, ssr3, ssr4 and tfg3. Also interacts with the TATA-binding protein (TBP). Component of the mst2 complex composed of at least eaf6, mst2, nto1, pdp3, ptf1, ptf2 and tfg3.

It localises to the nucleus. The protein localises to the nucleoplasm. In terms of biological role, functions as a component of the DNA-binding general transcription factor complex TFIID, and the RNA polymerase II associated general transcription factor complex TFIIF. Binding of TFIID to a promoter (with or without TATA element) is the initial step in preinitiation complex (PIC) formation. TFIID plays a key role in the regulation of gene expression by RNA polymerase II through different activities such as transcription activator interaction, core promoter recognition and selectivity, TFIIA and TFIIB interaction, facilitation of DNA opening and initiation of transcription. TFIIF is essential for the initiation of transcription by RNA polymerase II. TFIIF functions include the recruitment of RNA polymerase II to the promoter bound DNA-TBP-TFIIB complex, decreasing the affinity of RNA polymerase II for non-specific DNA, allowing for the subsequent recruitment of TFIIE and TFIIH, and facilitating RNA polymerase II elongation. The TAF14 subunit has stimulatory activity. Component of the SWI/SNF complex, an ATP-dependent chromatin remodeling complex, required for the positive and negative regulation of gene expression of a large number of genes. It changes chromatin structure by altering DNA-histone contacts within a nucleosome, leading eventually to a change in nucleosome position, thus facilitating or repressing binding of gene-specific transcription factors. Component of the mst2 complex which is a highly specific H3 lysine 14 (H3K14) acetyltransferase that functions together with gcn5 to regulate global levels of H3K14 acetylation (H3K14ac), critical for DNA damage checkpoint activation. This Schizosaccharomyces pombe (strain 972 / ATCC 24843) (Fission yeast) protein is Transcription initiation factor TFIID subunit 14 (tfg3).